The primary structure comprises 489 residues: DNA-dependent metalloprotease SPRTN (489 aa).

The residue at position 1 (methionine 1) is an N-acetylmethionine. In terms of domain architecture, SprT-like spans 45–212 (LQALFVQFND…KTCGGTYIKI (168 aa)). Histidine 111 contacts Zn(2+). Residue glutamate 112 is part of the active site. 2 residues coordinate Zn(2+): histidine 115 and histidine 130. An N6-acetyllysine modification is found at lysine 230. The SHP-box signature appears at 253–261 (FSGKGYVLG). A Phosphoserine modification is found at serine 268. A Glycyl lysine isopeptide (Lys-Gly) (interchain with G-Cter in SUMO2) cross-link involves residue lysine 303. The PIP-box motif lies at 325–332 (QNVLSNYF). Lysine 341 participates in a covalent cross-link: Glycyl lysine isopeptide (Lys-Gly) (interchain with G-Cter in SUMO2); alternate. A Glycyl lysine isopeptide (Lys-Gly) (interchain with G-Cter in ubiquitin); alternate cross-link involves residue lysine 341. A disordered region spans residues 357 to 409 (GNIPKNSVSSSSQRRVSSSKISLRNSSKVTESASVMPSQDVSGSEDTFPNKRP). Residue lysine 361 forms a Glycyl lysine isopeptide (Lys-Gly) (interchain with G-Cter in SUMO2) linkage. Positions 363–383 (SVSSSSQRRVSSSKISLRNSS) are enriched in low complexity. Phosphoserine; by CHEK1 occurs at positions 373 and 374. Lysine 376 participates in a covalent cross-link: Glycyl lysine isopeptide (Lys-Gly) (interchain with G-Cter in SUMO2); alternate. A Glycyl lysine isopeptide (Lys-Gly) (interchain with G-Cter in ubiquitin); alternate cross-link involves residue lysine 376. Residue serine 383 is modified to Phosphoserine; by CHEK1. A compositionally biased stretch (polar residues) spans 384–403 (KVTESASVMPSQDVSGSEDT). The Nuclear localization signal motif lies at 402 to 413 (DTFPNKRPRLED). Lysine 414 participates in a covalent cross-link: Glycyl lysine isopeptide (Lys-Gly) (interchain with G-Cter in ubiquitin). Glycyl lysine isopeptide (Lys-Gly) (interchain with G-Cter in SUMO2) cross-links involve residues lysine 423 and lysine 424. The segment at 428 to 453 (KSSGNDPKYSTTTAQNSSSSSSQSKM) is disordered. Residue lysine 435 forms a Glycyl lysine isopeptide (Lys-Gly) (interchain with G-Cter in ubiquitin) linkage. Residues 437–451 (STTTAQNSSSSSSQS) show a composition bias toward low complexity. A UBZ4-type zinc finger spans residues 453 to 480 (MVNCPVCQNEVLESQINEHLDWCLEGDS). Zn(2+) is bound by residues cysteine 456, cysteine 459, histidine 471, and cysteine 475. A Glycyl lysine isopeptide (Lys-Gly) (interchain with G-Cter in SUMO2) cross-link involves residue lysine 484.

It belongs to the Spartan family. In terms of assembly, homodimer. Interacts (VIA PIP-box) with PCNA (when ubiquitinated). Interacts (via its SHP-box) with VCP/p97. Interacts with RAD18. Interacts with KCTD13 and POLD3. It depends on Zn(2+) as a cofactor. In terms of processing, autocatalytically cleaved in response to double-stranded DNA-binding: autocatalytic cleavage takes place in trans and leads to inactivation. Post-translationally, monoubiquitinated; monoubiquitination promotes exclusion from chromatin. Deubiquitinated by VCPIP1: deubiquitination is required for subsequent acetylation and recruitment to chromatin and DNA damage sites. Acetylated following deubiquitination by VCPIP1, leading to recruitment to chromatin and DNA damage sites. In terms of processing, phosphorylation by CHEK1 promotes recruitment to chromatin.

Its subcellular location is the nucleus. The protein resides in the chromosome. With respect to regulation, DNA-binding activates the protease activity: single-stranded DNA-binding specifically activates ability to cleave covalent DNA-protein cross-links (DPCs). In contrast, double-stranded DNA-binding specifically activates autocatalytic cleavage, and subsequent inactivation. DNA-dependent metalloendopeptidase that mediates the proteolytic cleavage of covalent DNA-protein cross-links (DPCs) during DNA synthesis, thereby playing a key role in maintaining genomic integrity. DPCs are highly toxic DNA lesions that interfere with essential chromatin transactions, such as replication and transcription, and which are induced by reactive agents, such as UV light or formaldehyde. Associates with the DNA replication machinery and specifically removes DPCs during DNA synthesis. Catalyzes proteolytic cleavage of the HMCES DNA-protein cross-link following unfolding by the BRIP1/FANCJ helicase. Acts as a pleiotropic protease for DNA-binding proteins cross-linked with DNA, such as TOP1, TOP2A, histones H3 and H4. Mediates degradation of DPCs that are not ubiquitinated, while it is not able to degrade ubiquitinated DPCs. SPRTN activation requires polymerase collision with DPCs followed by helicase bypass of DPCs. Involved in recruitment of VCP/p97 to sites of DNA damage. Also acts as an activator of CHEK1 during normal DNA replication by mediating proteolytic cleavage of CHEK1, thereby promoting CHEK1 removal from chromatin and subsequent activation. Does not activate CHEK1 in response to DNA damage. May also act as a 'reader' of ubiquitinated PCNA: recruited to sites of UV damage and interacts with ubiquitinated PCNA and RAD18, the E3 ubiquitin ligase that monoubiquitinates PCNA. Facilitates chromatin association of RAD18 and is required for efficient PCNA monoubiquitination, promoting a feed-forward loop to enhance PCNA ubiquitination and translesion DNA synthesis. The protein is DNA-dependent metalloprotease SPRTN of Homo sapiens (Human).